A 367-amino-acid polypeptide reads, in one-letter code: Protein trichome birefringence-like 39 (367 aa).

Residues 7 to 29 (GNPSFLFFFFFFLCLSTVSAYIN) form a helical; Signal-anchor for type II membrane protein membrane-spanning segment. Positions 120-122 (GDS) match the GDS motif motif. The short motif at 343–357 (DCSHWCLPGLPDTWN) is the DCXHWCLPGXXDXWN motif element.

It belongs to the PC-esterase family. TBL subfamily.

It localises to the membrane. May act as a bridging protein that binds pectin and other cell wall polysaccharides. Probably involved in maintaining esterification of pectins. May be involved in the specific O-acetylation of cell wall polymers. This chain is Protein trichome birefringence-like 39 (TBL39), found in Arabidopsis thaliana (Mouse-ear cress).